Reading from the N-terminus, the 162-residue chain is ATP synthase subunit b 1 (162 aa).

A helical membrane pass occupies residues 3-23 (FLDATFFAFVGLVLFLALVVY).

It belongs to the ATPase B chain family. F-type ATPases have 2 components, F(1) - the catalytic core - and F(0) - the membrane proton channel. F(1) has five subunits: alpha(3), beta(3), gamma(1), delta(1), epsilon(1). F(0) has three main subunits: a(1), b(2) and c(10-14). The alpha and beta chains form an alternating ring which encloses part of the gamma chain. F(1) is attached to F(0) by a central stalk formed by the gamma and epsilon chains, while a peripheral stalk is formed by the delta and b chains.

Its subcellular location is the cell inner membrane. In terms of biological role, f(1)F(0) ATP synthase produces ATP from ADP in the presence of a proton or sodium gradient. F-type ATPases consist of two structural domains, F(1) containing the extramembraneous catalytic core and F(0) containing the membrane proton channel, linked together by a central stalk and a peripheral stalk. During catalysis, ATP synthesis in the catalytic domain of F(1) is coupled via a rotary mechanism of the central stalk subunits to proton translocation. Its function is as follows. Component of the F(0) channel, it forms part of the peripheral stalk, linking F(1) to F(0). This chain is ATP synthase subunit b 1, found in Rhizobium johnstonii (strain DSM 114642 / LMG 32736 / 3841) (Rhizobium leguminosarum bv. viciae).